An 829-amino-acid chain; its full sequence is uncharacterized protein (829 aa).

It belongs to the IIV-6 050L family.

This is an uncharacterized protein from Invertebrate iridescent virus 3 (IIV-3).